A 339-amino-acid chain; its full sequence is Ketol-acid reductoisomerase (NADP(+)) (339 aa).

Residues 1–182 form the KARI N-terminal Rossmann domain; the sequence is MKIYYEKDAD…GNTRAGVIET (182 aa). Residues 24–27, serine 51, serine 53, and 83–86 contribute to the NADP(+) site; these read YGSQ and DEKQ. Residue histidine 108 is part of the active site. Position 134 (glycine 134) interacts with NADP(+). The region spanning 183–328 is the KARI C-terminal knotted domain; the sequence is SFREETETDL…EKLRGMMHWA (146 aa). Mg(2+) is bound by residues aspartate 191, glutamate 195, glutamate 227, and glutamate 231. Serine 252 is a substrate binding site.

The protein belongs to the ketol-acid reductoisomerase family. The cofactor is Mg(2+).

It carries out the reaction (2R)-2,3-dihydroxy-3-methylbutanoate + NADP(+) = (2S)-2-acetolactate + NADPH + H(+). The enzyme catalyses (2R,3R)-2,3-dihydroxy-3-methylpentanoate + NADP(+) = (S)-2-ethyl-2-hydroxy-3-oxobutanoate + NADPH + H(+). It functions in the pathway amino-acid biosynthesis; L-isoleucine biosynthesis; L-isoleucine from 2-oxobutanoate: step 2/4. Its pathway is amino-acid biosynthesis; L-valine biosynthesis; L-valine from pyruvate: step 2/4. Its function is as follows. Involved in the biosynthesis of branched-chain amino acids (BCAA). Catalyzes an alkyl-migration followed by a ketol-acid reduction of (S)-2-acetolactate (S2AL) to yield (R)-2,3-dihydroxy-isovalerate. In the isomerase reaction, S2AL is rearranged via a Mg-dependent methyl migration to produce 3-hydroxy-3-methyl-2-ketobutyrate (HMKB). In the reductase reaction, this 2-ketoacid undergoes a metal-dependent reduction by NADPH to yield (R)-2,3-dihydroxy-isovalerate. The chain is Ketol-acid reductoisomerase (NADP(+)) from Hyphomonas neptunium (strain ATCC 15444).